The sequence spans 245 residues: 3-dehydroquinate dehydratase (245 aa).

3-dehydroquinate-binding positions include glutamate 35–arginine 37 and arginine 70. The active-site Proton donor/acceptor is the histidine 132. The active-site Schiff-base intermediate with substrate is lysine 158. 3-dehydroquinate-binding residues include arginine 199, threonine 220, and glutamine 224.

This sequence belongs to the type-I 3-dehydroquinase family. As to quaternary structure, homodimer.

The enzyme catalyses 3-dehydroquinate = 3-dehydroshikimate + H2O. Its pathway is metabolic intermediate biosynthesis; chorismate biosynthesis; chorismate from D-erythrose 4-phosphate and phosphoenolpyruvate: step 3/7. Involved in the third step of the chorismate pathway, which leads to the biosynthesis of aromatic amino acids. Catalyzes the cis-dehydration of 3-dehydroquinate (DHQ) and introduces the first double bond of the aromatic ring to yield 3-dehydroshikimate. The sequence is that of 3-dehydroquinate dehydratase from Haloquadratum walsbyi (strain DSM 16790 / HBSQ001).